We begin with the raw amino-acid sequence, 116 residues long: Iron-sulfur cluster insertion protein ErpA (116 aa).

Residues Cys-44, Cys-108, and Cys-110 each contribute to the iron-sulfur cluster site.

The protein belongs to the HesB/IscA family. As to quaternary structure, homodimer. The cofactor is iron-sulfur cluster.

Required for insertion of 4Fe-4S clusters for at least IspG. This Shewanella denitrificans (strain OS217 / ATCC BAA-1090 / DSM 15013) protein is Iron-sulfur cluster insertion protein ErpA.